A 113-amino-acid chain; its full sequence is Endoribonuclease SymE (113 aa).

The SpoVT-AbrB domain occupies 29–74 (GRYPDYSRIPAITLKGQWLEVAGFATGTAVDVKVMEGCIVLTAQPP).

This sequence belongs to the SymE family.

It localises to the cytoplasm. Functionally, involved in the degradation and recycling of damaged RNA. It is itself a target for degradation by the ATP-dependent protease Lon. In Escherichia coli O7:K1 (strain IAI39 / ExPEC), this protein is Endoribonuclease SymE.